The chain runs to 830 residues: Serine/threonine-protein kinase pkn2 (830 aa).

At 1–605 the chain is on the cytoplasmic side; the sequence is MLAPDSLVLD…GELLRQRRRE (605 aa). Positions 13–283 constitute a Protein kinase domain; sequence FRVLRPLGSG…DALAAAHSAL (271 aa). Residues 19–27 and lysine 42 each bind ATP; that span reads LGSGGMGEV. Aspartate 135 acts as the Proton acceptor in catalysis. Residues 296-326 are disordered; the sequence is VPQPGSGATPSSGTSVFGTGSASGSSSGPTG. Positions 299-326 are enriched in low complexity; the sequence is PGSGATPSSGTSVFGTGSASGSSSGPTG. The Guanylate cyclase domain occupies 396–511; the sequence is TVMLTDIQGF…EPMEVIEAVE (116 aa). The chain crosses the membrane as a helical span at residues 606 to 623; the sequence is AALVAGAVVLLGAGAAWL. The Periplasmic segment spans residues 624–830; the sequence is SQRNDAGTRA…AIKSLKQKSD (207 aa).

The protein belongs to the protein kinase superfamily. Ser/Thr protein kinase family.

It localises to the cell membrane. The catalysed reaction is L-seryl-[protein] + ATP = O-phospho-L-seryl-[protein] + ADP + H(+). It catalyses the reaction L-threonyl-[protein] + ATP = O-phospho-L-threonyl-[protein] + ADP + H(+). Its function is as follows. Regulates the activity of endogenous beta-lactamase or related enzymes, by blocking their secretion by phosphorylation, in response to an external signal yet to be identified. The polypeptide is Serine/threonine-protein kinase pkn2 (pkn2) (Myxococcus xanthus).